Reading from the N-terminus, the 78-residue chain is Small ribosomal subunit protein bS20 (78 aa).

Belongs to the bacterial ribosomal protein bS20 family.

Functionally, binds directly to 16S ribosomal RNA. The sequence is that of Small ribosomal subunit protein bS20 from Streptococcus pneumoniae serotype 19F (strain G54).